Consider the following 249-residue polypeptide: Cell division protein FtsQ (249 aa).

Over 1–6 (MKFILF) the chain is Cytoplasmic. Residues 7–23 (ALLVSAGSWYGWKQLHS) form a helical membrane-spanning segment. At 24–249 (QDAVSKPIRY…YKNVMKERRI (226 aa)) the chain is on the periplasmic side. Residues 29 to 98 (KPIRYVKIEG…DAVHIKITEQ (70 aa)) enclose the POTRA domain.

The protein belongs to the FtsQ/DivIB family. FtsQ subfamily. As to quaternary structure, part of a complex composed of FtsB, FtsL and FtsQ.

The protein resides in the cell inner membrane. Functionally, essential cell division protein. May link together the upstream cell division proteins, which are predominantly cytoplasmic, with the downstream cell division proteins, which are predominantly periplasmic. May control correct divisome assembly. The chain is Cell division protein FtsQ from Methylomonas methanica (strain DSM 25384 / MC09).